Consider the following 944-residue polypeptide: Thyroid peroxidase (944 aa).

The signal sequence occupies residues 1 to 30 (MVGLVPAGSAWGGRALAVLGVTLLVALARG). Residues 31-858 (LLPFFLGGRD…SGRLPKASLV (828 aa)) are Extracellular-facing. N-linked (GlcNAc...) asparagine glycosylation occurs at Asn-141. Cys-154 and Cys-170 are joined by a disulfide. Asp-250 contacts heme b. The active-site Proton acceptor is His-251. Asp-252 contacts Ca(2+). Cystine bridges form between Cys-271–Cys-281 and Cys-275–Cys-295. An N-linked (GlcNAc...) asparagine glycan is attached at Asn-316. Thr-330, Phe-332, Asp-334, and Ser-336 together coordinate Ca(2+). Asn-351 is a glycosylation site (N-linked (GlcNAc...) asparagine). Heme b is bound by residues Glu-408 and His-503. Cystine bridges form between Cys-606–Cys-663, Cys-704–Cys-729, Cys-750–Cys-790, Cys-776–Cys-802, Cys-808–Cys-822, Cys-816–Cys-831, and Cys-833–Cys-846. The N-linked (GlcNAc...) asparagine glycan is linked to Asn-623. The Sushi domain maps to 748 to 804 (DACGLPDSLDNGDVVLCGEAGRRVLVFSCRHGFKLQGPEQVACSPRGGAVRAPVCRD). One can recognise an EGF-like; calcium-binding domain in the interval 804–847 (DINECEDASHPPCHGSARCRNTKGGFRCECTDPAVLGEDGTTCV). The chain crosses the membrane as a helical span at residues 859-879 (SIALGIVLVVGLAGLTWTLVC). Topologically, residues 880–944 (RWAHAGRKAS…RSHVAQGSPA (65 aa)) are cytoplasmic. The tract at residues 895 to 944 (LGGRGAPPPGRGAGQDGASGSLVPPLGPQGRTRAVDPTSSRSHVAQGSPA) is disordered. Residues 931 to 944 (PTSSRSHVAQGSPA) show a composition bias toward polar residues.

The protein belongs to the peroxidase family. XPO subfamily. As to quaternary structure, interacts with DUOX1, DUOX2 and CYBA. It depends on Ca(2+) as a cofactor. Heme b serves as cofactor. Heme is covalently bound through a H(2)O(2)-dependent autocatalytic process. Heme insertion is important for the delivery of protein at the cell surface. Post-translationally, cleaved in its N-terminal part.

The protein resides in the membrane. It catalyses the reaction 2 iodide + H2O2 + 2 H(+) = diiodine + 2 H2O. The enzyme catalyses [thyroglobulin]-L-tyrosine + iodide + H2O2 + H(+) = [thyroglobulin]-3-iodo-L-tyrosine + 2 H2O. It carries out the reaction [thyroglobulin]-3-iodo-L-tyrosine + iodide + H2O2 + H(+) = [thyroglobulin]-3,5-diiodo-L-tyrosine + 2 H2O. The catalysed reaction is 2 [thyroglobulin]-3,5-diiodo-L-tyrosine + H2O2 = [thyroglobulin]-L-thyroxine + [thyroglobulin]-dehydroalanine + 2 H2O. It catalyses the reaction [thyroglobulin]-3-iodo-L-tyrosine + [thyroglobulin]-3,5-diiodo-L-tyrosine + H2O2 = [thyroglobulin]-3,3',5-triiodo-L-thyronine + [thyroglobulin]-dehydroalanine + 2 H2O. It participates in hormone biosynthesis; thyroid hormone biosynthesis. In terms of biological role, iodination and coupling of the hormonogenic tyrosines in thyroglobulin to yield the thyroid hormones T(3) and T(4). The protein is Thyroid peroxidase (TPO) of Canis lupus familiaris (Dog).